The following is a 409-amino-acid chain: Tryptophan synthase beta chain 1 (409 aa).

K104 is subject to N6-(pyridoxal phosphate)lysine.

The protein belongs to the TrpB family. In terms of assembly, tetramer of two alpha and two beta chains. The cofactor is pyridoxal 5'-phosphate.

The enzyme catalyses (1S,2R)-1-C-(indol-3-yl)glycerol 3-phosphate + L-serine = D-glyceraldehyde 3-phosphate + L-tryptophan + H2O. Its pathway is amino-acid biosynthesis; L-tryptophan biosynthesis; L-tryptophan from chorismate: step 5/5. Functionally, the beta subunit is responsible for the synthesis of L-tryptophan from indole and L-serine. The chain is Tryptophan synthase beta chain 1 (trpB1) from Nostoc sp. (strain PCC 7120 / SAG 25.82 / UTEX 2576).